The chain runs to 967 residues: Haze protective factor 1 (967 aa).

A signal peptide spans 1–23; it reads MFNRFNKLQAALALVLYSQSALG. N-linked (GlcNAc...) asparagine glycosylation is found at N28 and N35. Residues 72-301 are disordered; sequence SSSTEVSSSI…STSSASTASG (230 aa). A run of 9 repeats spans residues 93–105, 106–118, 119–131, 132–144, 153–165, 166–178, 179–191, 192–204, and 205–217. Positions 93-278 are 13 X approximate repeats, Ser-rich; that stretch reads SITSSGSSVS…QSGSSVSGSS (186 aa). Residues 218–230 form a 1-10; approximate repeat; that stretch reads SATESGSASSVPS. A 1-11; approximate repeat occupies 234–247; sequence SVTESGSSSSASES. A 1-12; approximate repeat occupies 248–259; sequence SITQSGTASGSS. One copy of the 1-13 repeat lies at 266 to 278; that stretch reads SVTQSGSSVSGSS. N493, N601, and N638 each carry an N-linked (GlcNAc...) asparagine glycan. 4 tandem repeats follow at residues 745 to 780, 781 to 815, 816 to 854, and 855 to 893. The tract at residues 745–902 is 4.5 X approximate tandem repeats, Thr-rich; it reads SSKSYTTVTV…ASPKSYTTVT (158 aa). The disordered stretch occupies residues 836–857; that stretch reads KTVTSEAPKETSETSETSAAPK. The stretch at 894–902 is one 2-5; truncated repeat; sequence SPKSYTTVT. A946 carries GPI-anchor amidated alanine lipidation. The propeptide at 947–967 is removed in mature form; that stretch reads AGLNANTLNALVGIFVLAFFN.

Belongs to the SRP1/TIP1 family. In terms of processing, the GPI-anchor is attached to the protein in the endoplasmic reticulum and serves to target the protein to the cell surface. There, the glucosamine-inositol phospholipid moiety is cleaved off and the GPI-modified mannoprotein is covalently attached via its lipidless GPI glycan remnant to the 1,6-beta-glucan of the outer cell wall layer.

It localises to the secreted. The protein resides in the cell wall. The protein localises to the membrane. Involved in cell wall organization and biosynthesis. The chain is Haze protective factor 1 (HPF1) from Saccharomyces cerevisiae (strain ATCC 204508 / S288c) (Baker's yeast).